The chain runs to 71 residues: SPbeta prophage-derived uncharacterized protein YopF (71 aa).

The polypeptide is SPbeta prophage-derived uncharacterized protein YopF (yopF) (Bacillus subtilis (strain 168)).